Here is a 289-residue protein sequence, read N- to C-terminus: 4-hydroxy-3-methylbut-2-enyl diphosphate reductase (289 aa).

Residue Cys-12 coordinates [4Fe-4S] cluster. (2E)-4-hydroxy-3-methylbut-2-enyl diphosphate contacts are provided by His-41 and His-84. His-41 and His-84 together coordinate dimethylallyl diphosphate. Residues His-41 and His-84 each coordinate isopentenyl diphosphate. Cys-106 is a [4Fe-4S] cluster binding site. A (2E)-4-hydroxy-3-methylbut-2-enyl diphosphate-binding site is contributed by His-134. Dimethylallyl diphosphate is bound at residue His-134. Residue His-134 participates in isopentenyl diphosphate binding. Residue Glu-136 is the Proton donor of the active site. Ser-172 is a (2E)-4-hydroxy-3-methylbut-2-enyl diphosphate binding site. Residue Cys-200 coordinates [4Fe-4S] cluster. Residues Ser-229, Asn-231, and Ser-273 each coordinate (2E)-4-hydroxy-3-methylbut-2-enyl diphosphate. Ser-229, Asn-231, and Ser-273 together coordinate dimethylallyl diphosphate. Isopentenyl diphosphate contacts are provided by Ser-229, Asn-231, and Ser-273.

Belongs to the IspH family. Requires [4Fe-4S] cluster as cofactor.

It carries out the reaction isopentenyl diphosphate + 2 oxidized [2Fe-2S]-[ferredoxin] + H2O = (2E)-4-hydroxy-3-methylbut-2-enyl diphosphate + 2 reduced [2Fe-2S]-[ferredoxin] + 2 H(+). The catalysed reaction is dimethylallyl diphosphate + 2 oxidized [2Fe-2S]-[ferredoxin] + H2O = (2E)-4-hydroxy-3-methylbut-2-enyl diphosphate + 2 reduced [2Fe-2S]-[ferredoxin] + 2 H(+). It functions in the pathway isoprenoid biosynthesis; dimethylallyl diphosphate biosynthesis; dimethylallyl diphosphate from (2E)-4-hydroxy-3-methylbutenyl diphosphate: step 1/1. The protein operates within isoprenoid biosynthesis; isopentenyl diphosphate biosynthesis via DXP pathway; isopentenyl diphosphate from 1-deoxy-D-xylulose 5-phosphate: step 6/6. Its function is as follows. Catalyzes the conversion of 1-hydroxy-2-methyl-2-(E)-butenyl 4-diphosphate (HMBPP) into a mixture of isopentenyl diphosphate (IPP) and dimethylallyl diphosphate (DMAPP). Acts in the terminal step of the DOXP/MEP pathway for isoprenoid precursor biosynthesis. This Opitutus terrae (strain DSM 11246 / JCM 15787 / PB90-1) protein is 4-hydroxy-3-methylbut-2-enyl diphosphate reductase.